We begin with the raw amino-acid sequence, 291 residues long: MELLCCEVDTIGRAHLDRNLITDRVLQTMLKAEETSCPSMSYFKCVQKEILPNMRKIVATWMLEVCEEQKCEEEVFPLAMNYLDRFLSVEPLRKSWLQLLGATCMFLASKMKETIPLTAEKLCIYTDNSIRPDELLIMELRVLNKLKWDLASVTPHDFIEHFLNKMPLTEDTKQIIRKHAQTFVALCATDVNFISNPPSMIAAGSVAAAVQGLNLGNADSVFSTQRLTLFLSQVIKCDPDCLRACQEQIESLLESSLRQAQQQHNASSDTKNMVDEVDISCTPTDVRDVNI.

At threonine 282 the chain carries Phosphothreonine.

Belongs to the cyclin family. Cyclin D subfamily. As to quaternary structure, interacts with the cdk4 and cdk6 protein kinases to form a serine/threonine kinase holoenzyme complex. The cyclin subunit imparts substrate specificity to the complex. In terms of processing, phosphorylation at Thr-282 by MAP kinases is required for ubiquitination and degradation by the DCX(AMBRA1) complex. Post-translationally, ubiquitinated by the DCX(AMBRA1) complex during the transition from G1 to S cell phase, leading to its degradation. The DCX(AMBRA1) complex represents the major regulator of CCND1 stability during the G1/S transition.

The protein localises to the nucleus. Its subcellular location is the cytoplasm. Its function is as follows. Regulatory component of the cyclin D1-CDK4 (DC) complex that phosphorylates and inhibits members of the retinoblastoma (RB) protein family including RB1 and regulates the cell-cycle during G(1)/S transition. Phosphorylation of RB1 allows dissociation of the transcription factor E2F from the RB/E2F complex and the subsequent transcription of E2F target genes which are responsible for the progression through the G(1) phase. Hypophosphorylates RB1 in early G(1) phase. Cyclin D-CDK4 complexes are major integrators of various mitogenenic and antimitogenic signals. This Xenopus laevis (African clawed frog) protein is G1/S-specific cyclin-D1 (ccnd1).